The sequence spans 150 residues: Large ribosomal subunit protein bL9 (150 aa).

The protein belongs to the bacterial ribosomal protein bL9 family.

Its function is as follows. Binds to the 23S rRNA. This chain is Large ribosomal subunit protein bL9, found in Limosilactobacillus reuteri (strain DSM 20016) (Lactobacillus reuteri).